We begin with the raw amino-acid sequence, 215 residues long: FGFR1 oncogene partner 2 homolog (215 aa).

Residues 12 to 186 are a coiled coil; that stretch reads AKELVERLRE…REILQITKIS (175 aa). The interval 193-215 is disordered; sequence EDASENSPHSAPVPNTDLILRKS.

The protein belongs to the SIKE family.

It localises to the cytoplasm. This Xenopus laevis (African clawed frog) protein is FGFR1 oncogene partner 2 homolog (fgfr1op2).